The primary structure comprises 678 residues: Platelet endothelial cell adhesion molecule (678 aa).

An N-terminal signal peptide occupies residues 1–17; it reads MLLALLLTMLLYASLQA. At 18 to 589 the chain is on the extracellular side; that stretch reads QENSFTINSI…VRVFLAPWKK (572 aa). Ig-like C2-type domains are found at residues 40 to 126, 135 to 213, 225 to 309, 315 to 391, 413 to 472, and 488 to 577; these read GQKL…PEVT, GGIV…FIRS, PKFQ…ILVN, PRPK…LVPV, GQII…NCHS, and PVDE…RSGP. A disulfide bridge connects residues Cys-47 and Cys-99. N-linked (GlcNAc...) asparagine glycosylation is found at Asn-74 and Asn-141. Cystine bridges form between Cys-142–Cys-195 and Cys-245–Cys-293. N-linked (GlcNAc...) asparagine glycosylation is found at Asn-309, Asn-345, Asn-360, Asn-424, and Asn-540. Disulfide bonds link Cys-336–Cys-375, Cys-420–Cys-465, and Cys-512–Cys-561. The chain crosses the membrane as a helical span at residues 590–610; that stretch reads GLIAVVVIGVVIAALIVAAKY. Residues 611–678 are Cytoplasmic-facing; it reads YFLRKAKAKQ…EPHQENGRLP (68 aa). A disordered region spans residues 634 to 653; sequence NSNSEKVSEPSVETNSHYDS. Residues 658–663 carry the ITIM motif motif; it reads VEYTEV. Tyr-660 bears the Phosphotyrosine; by FER mark.

In terms of assembly, trans-homodimer (via Ig-like C2-type 1 and Ig-like C2-type 2 domains); trans-homodimerization is required for cell-cell interaction. Forms a complex with BDKRB2 and GNAQ. Interacts with BDKRB2 and GNAQ. Interacts with PTPN11. Interacts with FER. Interacts with CD177; the interaction is Ca(2+)-dependent; the interaction is direct. In terms of processing, phosphorylated on Ser and Tyr residues after cellular activation. In endothelial cells Fyn mediates mechanical-force (stretch or pull) induced tyrosine phosphorylation. Phosphorylated on tyrosine residues by FER and FES in response to FCER1 activation. Post-translationally, palmitoylation by ZDHHC21 is necessary for cell surface expression in endothelial cells and enrichment in membrane rafts.

It localises to the cell membrane. The protein resides in the membrane raft. It is found in the cell junction. In terms of biological role, cell adhesion molecule which is required for leukocyte transendothelial migration (TEM) under most inflammatory conditions. Tyr-660 plays a critical role in TEM and is required for efficient trafficking of PECAM1 to and from the lateral border recycling compartment (LBRC) and is also essential for the LBRC membrane to be targeted around migrating leukocytes. Trans-homophilic interaction may play a role in endothelial cell-cell adhesion via cell junctions. Heterophilic interaction with CD177 plays a role in transendothelial migration of neutrophils. Homophilic ligation of PECAM1 prevents macrophage-mediated phagocytosis of neighboring viable leukocytes by transmitting a detachment signal. Promotes macrophage-mediated phagocytosis of apoptotic leukocytes by tethering them to the phagocytic cells; PECAM1-mediated detachment signal appears to be disabled in apoptotic leukocytes. Modulates bradykinin receptor BDKRB2 activation. Regulates bradykinin- and hyperosmotic shock-induced ERK1/2 activation in endothelial cells. Induces susceptibility to atherosclerosis. The polypeptide is Platelet endothelial cell adhesion molecule (Pecam1) (Rattus norvegicus (Rat)).